The sequence spans 576 residues: K(+)/H(+) antiporter NhaP2 (576 aa).

13 helical membrane-spanning segments follow: residues 6-26 (INSF…LSPM), 34-54 (ILLI…GGIL), 58-78 (YSTA…DGGM), 87-107 (VALW…TSIT), 109-129 (MMAA…GAIV), 163-183 (PMAV…DTEM), 185-205 (FSFM…LGLG), 219-239 (LADG…YAAS), 242-262 (LGGS…NKPT), 271-291 (VLDG…GLLL), 299-319 (ILIP…PVAV), 335-355 (WFIS…VFPM), and 359-379 (LPGA…SLLV). Positions 405–486 (SGVEIYPSSE…LEALSNLFSQ (82 aa)) constitute an RCK C-terminal domain.

Belongs to the monovalent cation:proton antiporter 1 (CPA1) transporter (TC 2.A.36) family. NhaP2 subfamily.

It is found in the cell inner membrane. It carries out the reaction K(+)(in) + H(+)(out) = K(+)(out) + H(+)(in). In terms of biological role, k(+)/H(+) antiporter that extrudes potassium in exchange for external protons and maintains the internal concentration of potassium under toxic levels. The sequence is that of K(+)/H(+) antiporter NhaP2 from Shewanella baltica (strain OS155 / ATCC BAA-1091).